The primary structure comprises 223 residues: Mating-type protein ALPHA2 (223 aa).

A DNA-binding region (homeobox; TALE-type) is located at residues 151–213 (EFKKGKRFLK…NRRRKDKITE (63 aa)).

This sequence belongs to the TALE/M-ATYP homeobox family. Forms a heterodimer with A1.

Its subcellular location is the nucleus. In terms of biological role, mating type proteins are sequence specific DNA-binding proteins that act as master switches in yeast differentiation by controlling gene expression in a cell type-specific fashion. Transcriptional corepressor that acts in conjunction with A1 to repress transcription of haploid-specific genes. This Kluyveromyces lactis (strain ATCC 8585 / CBS 2359 / DSM 70799 / NBRC 1267 / NRRL Y-1140 / WM37) (Yeast) protein is Mating-type protein ALPHA2 (HMLALPHA2).